We begin with the raw amino-acid sequence, 333 residues long: Glycerol-3-phosphate dehydrogenase [NAD(P)+] 2 (333 aa).

S12, W13, R32, and K106 together coordinate NADPH. Residues K106 and G134 each coordinate sn-glycerol 3-phosphate. NADPH is bound at residue A138. Positions 189, 242, 252, 253, and 254 each coordinate sn-glycerol 3-phosphate. K189 (proton acceptor) is an active-site residue. R253 lines the NADPH pocket. NADPH is bound by residues V277 and E279.

This sequence belongs to the NAD-dependent glycerol-3-phosphate dehydrogenase family.

It is found in the cytoplasm. The enzyme catalyses sn-glycerol 3-phosphate + NAD(+) = dihydroxyacetone phosphate + NADH + H(+). The catalysed reaction is sn-glycerol 3-phosphate + NADP(+) = dihydroxyacetone phosphate + NADPH + H(+). It functions in the pathway membrane lipid metabolism; glycerophospholipid metabolism. Catalyzes the reduction of the glycolytic intermediate dihydroxyacetone phosphate (DHAP) to sn-glycerol 3-phosphate (G3P), the key precursor for phospholipid synthesis. The sequence is that of Glycerol-3-phosphate dehydrogenase [NAD(P)+] 2 from Sphingopyxis alaskensis (strain DSM 13593 / LMG 18877 / RB2256) (Sphingomonas alaskensis).